Consider the following 301-residue polypeptide: Probable 5-dehydro-4-deoxyglucarate dehydratase (301 aa).

The protein belongs to the DapA family.

It carries out the reaction 5-dehydro-4-deoxy-D-glucarate + H(+) = 2,5-dioxopentanoate + CO2 + H2O. It participates in carbohydrate acid metabolism; D-glucarate degradation; 2,5-dioxopentanoate from D-glucarate: step 2/2. In Cereibacter sphaeroides (strain ATCC 17029 / ATH 2.4.9) (Rhodobacter sphaeroides), this protein is Probable 5-dehydro-4-deoxyglucarate dehydratase.